Consider the following 617-residue polypeptide: Electron transfer flavoprotein-ubiquinone oxidoreductase, mitochondrial (617 aa).

The transit peptide at 1–33 (MQVLLARLACPVYQCFHAIKIKKNYLPLCATRW) directs the protein to the mitochondrion. 71-85 (VVIVGAGPAGLSAAA) lines the FAD pocket. N6-acetyllysine is present on Lys-96. An intramembrane segment occupies 109–130 (IGAHTLSGACLDPRALQELFPD). 2 positions are modified to N6-acetyllysine: Lys-132 and Lys-223. 2 residues coordinate a ubiquinone: Gly-305 and Gly-306. Residue Lys-357 is modified to N6-acetyllysine. Residues 428-447 (IGLDVTEYEDNLKKSWVWKE) lie within the membrane without spanning it. Residue Ser-551 is modified to Phosphoserine. Residues Cys-561, Cys-586, Cys-589, and Cys-592 each coordinate [4Fe-4S] cluster. The region spanning 577 to 606 (FRLQINAQNCVHCKTCDIKDPSQNINWVVP) is the 4Fe-4S ferredoxin-type domain.

Belongs to the ETF-QO/FixC family. As to quaternary structure, monomer. The cofactor is [4Fe-4S] cluster. FAD serves as cofactor.

The protein localises to the mitochondrion inner membrane. It carries out the reaction a ubiquinone + reduced [electron-transfer flavoprotein] = a ubiquinol + oxidized [electron-transfer flavoprotein] + H(+). In terms of biological role, accepts electrons from ETF and reduces ubiquinone. This is Electron transfer flavoprotein-ubiquinone oxidoreductase, mitochondrial (ETFDH) from Bos taurus (Bovine).